Consider the following 440-residue polypeptide: Transposon Ty1-ML1 Gag polyprotein (440 aa).

Composition is skewed to polar residues over residues 1–23 (MESQQLSNYPNISHGSACASVTS), 48–60 (TKANSQQTTTPAS), and 127–152 (QSQFPQYPSSVGTPLSTPSPESGNTF). Disordered regions lie at residues 1–88 (MESQ…YPQQ), 126–173 (PQSQ…RPPP), and 352–440 (GSRN…PETY). Over residues 153–165 (TDSSSADSDMTST) the composition is skewed to low complexity. The RNA-binding stretch occupies residues 299–401 (NNGIHINNKV…NSKSKTARAH (103 aa)). Positions 402-418 (NVSTSNNSPSTDNDSIS) are enriched in low complexity. Ser416 is modified (phosphoserine). The span at 419-428 (KSTTEPIQLN) shows a compositional bias: polar residues. Basic and acidic residues predominate over residues 429-440 (NKHDLHLRPETY).

As to quaternary structure, homotrimer.

The protein resides in the cytoplasm. Capsid protein (CA) is the structural component of the virus-like particle (VLP), forming the shell that encapsulates the retrotransposons dimeric RNA genome. The particles are assembled from trimer-clustered units and there are holes in the capsid shells that allow for the diffusion of macromolecules. CA also has nucleocapsid-like chaperone activity, promoting primer tRNA(i)-Met annealing to the multipartite primer-binding site (PBS), dimerization of Ty1 RNA and initiation of reverse transcription. The chain is Transposon Ty1-ML1 Gag polyprotein (TY1A-ML1) from Saccharomyces cerevisiae (strain ATCC 204508 / S288c) (Baker's yeast).